A 108-amino-acid polypeptide reads, in one-letter code: Small ribosomal subunit protein uS10 (108 aa).

It belongs to the universal ribosomal protein uS10 family. In terms of assembly, part of the 30S ribosomal subunit.

In terms of biological role, involved in the binding of tRNA to the ribosomes. In Rhodopirellula baltica (strain DSM 10527 / NCIMB 13988 / SH1), this protein is Small ribosomal subunit protein uS10.